The chain runs to 177 residues: MSRVAKAPVTVPNGVTVTQNGRQVEVKGSKGTLSFNLHALVELKQEEGKLQLAPAKESKDAWMQAGTARAVLNNLVKGVSEGFERKLQLVGVGYKAVVKGTVVNLNLGYSHPIDYALPEGVTAETPTATEIILKSANKQLLGQVAAEIRAYRSPEPYKGKGVRYSDEVILRKEAKKK.

Belongs to the universal ribosomal protein uL6 family. In terms of assembly, part of the 50S ribosomal subunit.

This protein binds to the 23S rRNA, and is important in its secondary structure. It is located near the subunit interface in the base of the L7/L12 stalk, and near the tRNA binding site of the peptidyltransferase center. The polypeptide is Large ribosomal subunit protein uL6 (Acinetobacter baumannii (strain SDF)).